The following is a 133-amino-acid chain: Ribosome-binding factor A (133 aa).

It belongs to the RbfA family. As to quaternary structure, monomer. Binds 30S ribosomal subunits, but not 50S ribosomal subunits or 70S ribosomes.

The protein resides in the cytoplasm. In terms of biological role, one of several proteins that assist in the late maturation steps of the functional core of the 30S ribosomal subunit. Associates with free 30S ribosomal subunits (but not with 30S subunits that are part of 70S ribosomes or polysomes). Required for efficient processing of 16S rRNA. May interact with the 5'-terminal helix region of 16S rRNA. This Cytophaga hutchinsonii (strain ATCC 33406 / DSM 1761 / CIP 103989 / NBRC 15051 / NCIMB 9469 / D465) protein is Ribosome-binding factor A.